The primary structure comprises 243 residues: DNA repair protein RecO (243 aa).

This sequence belongs to the RecO family.

Involved in DNA repair and RecF pathway recombination. The polypeptide is DNA repair protein RecO (Xylella fastidiosa (strain M23)).